A 38-amino-acid polypeptide reads, in one-letter code: Photosystem I reaction center subunit IX (38 aa).

Residues 4–24 form a helical membrane-spanning segment; the sequence is FLTTAPVVAAIWFTLTAGILI.

This sequence belongs to the PsaJ family.

Its subcellular location is the cellular thylakoid membrane. In terms of biological role, may help in the organization of the PsaE and PsaF subunits. This is Photosystem I reaction center subunit IX from Parasynechococcus marenigrum (strain WH8102).